Consider the following 205-residue polypeptide: Putative 3-methyladenine DNA glycosylase (205 aa).

The protein belongs to the DNA glycosylase MPG family.

This is Putative 3-methyladenine DNA glycosylase from Staphylococcus epidermidis (strain ATCC 35984 / DSM 28319 / BCRC 17069 / CCUG 31568 / BM 3577 / RP62A).